Here is a 286-residue protein sequence, read N- to C-terminus: uncharacterized protein (286 aa).

This is an uncharacterized protein from Schizosaccharomyces pombe (strain 972 / ATCC 24843) (Fission yeast).